The primary structure comprises 432 residues: GTPase Obg (432 aa).

Positions 1–159 constitute an Obg domain; sequence MKFIDTAKFT…YEVKAELKVL (159 aa). Residues 160 to 332 form the OBG-type G domain; that stretch reads ADVGFVGLPN…LLLKIAKELE (173 aa). GTP-binding positions include 166 to 173, 191 to 195, 213 to 216, 284 to 287, and 313 to 315; these read GLPNAGKS, FTTLN, DLPG, NKMD, and SGL. Residues serine 173 and threonine 193 each contribute to the Mg(2+) site. Residues 354–432 enclose the OCT domain; the sequence is RLEEDEEDIQ…VFEYELEWMD (79 aa).

The protein belongs to the TRAFAC class OBG-HflX-like GTPase superfamily. OBG GTPase family. In terms of assembly, monomer. Requires Mg(2+) as cofactor.

It localises to the cytoplasm. An essential GTPase which binds GTP, GDP and possibly (p)ppGpp with moderate affinity, with high nucleotide exchange rates and a fairly low GTP hydrolysis rate. Plays a role in control of the cell cycle, stress response, ribosome biogenesis and in those bacteria that undergo differentiation, in morphogenesis control. The sequence is that of GTPase Obg from Mesoplasma florum (strain ATCC 33453 / NBRC 100688 / NCTC 11704 / L1) (Acholeplasma florum).